Reading from the N-terminus, the 112-residue chain is MDRDRKRVKMEKEDDEEEKMEKLYTVLKNAREMRKYVNSSMEKKRQEEEERARVRRFPSFQPEDFIFMNKAEANNIEKAANESSSASNEYDGSKEKQEGSETNVCLDLNLSL.

2 disordered regions span residues 1–20 and 77–112; these read MDRD…EEKM and EKAA…NLSL. Coiled-coil stretches lie at residues 1–35 and 69–96; these read MDRD…EMRK and NKAE…SKEK. The segment covering 77 to 89 has biased composition (low complexity); that stretch reads EKAANESSSASNE.

It belongs to the NPR1-interactor family. Interacts with NPR1 C-terminal region.

Its subcellular location is the nucleus. The polypeptide is Protein NIM1-INTERACTING 3 (Arabidopsis thaliana (Mouse-ear cress)).